Reading from the N-terminus, the 2948-residue chain is Transforming acidic coiled-coil-containing protein 2 (2948 aa).

The span at Met1 to Asn30 shows a compositional bias: polar residues. Disordered regions lie at residues Met1–Leu304, Arg314–Cys333, Ala392–Ser453, Leu465–Glu785, Ser825–Pro964, Cys985–Ser1050, Ala1062–Thr1154, Ala1243–Pro1274, Gln1296–Ala1400, Pro1427–Leu1463, Ala1493–Arg1661, Leu1675–Ala1705, Val1741–Thr1878, His1907–Thr2035, and Leu2052–Pro2460. Over residues Gly174–Gln184 the composition is skewed to basic and acidic residues. Phosphoserine is present on residues Ser197, Ser201, and Ser269. Position 325 is a phosphothreonine (Val325). Ser493 carries the post-translational modification Phosphoserine. Positions Glu496–His507 are enriched in basic and acidic residues. Ser561, Ser571, and Ser575 each carry phosphoserine. Residues Ser604–Ser629 show a composition bias toward basic and acidic residues. Ser758 carries the phosphoserine modification. The segment covering Ser911 to Ser926 has biased composition (low complexity). At Ser962 the chain carries Phosphoserine. The span at Cys985–Ala996 shows a compositional bias: polar residues. At Ser1025 the chain carries Phosphoserine. A phosphoserine mark is found at Ser1267 and Ser1313. Positions Ala1348–Ala1357 are enriched in low complexity. Residues Asp1383–Ala1400 are compositionally biased toward polar residues. Ser1562 carries the post-translational modification Phosphoserine. 2 stretches are compositionally biased toward basic and acidic residues: residues Asp1801–Pro1823 and Pro1834–Glu1854. Residues Ala1862–Asp1873 show a composition bias toward low complexity. Over residues Pro1939–Asp1948 the composition is skewed to basic and acidic residues. Residues Lys1963–Ile1976 show a composition bias toward pro residues. Ser2072 is subject to Phosphoserine. Over residues Asp2074–Asn2102 the composition is skewed to polar residues. The span at Ser2114–Leu2124 shows a compositional bias: low complexity. The span at Lys2125–Thr2141 shows a compositional bias: basic residues. Ser2161 and Ser2226 each carry phosphoserine. Position 2246 is a phosphothreonine (Thr2246). Position 2256 is a phosphoserine (Ser2256). A compositionally biased stretch (basic and acidic residues) spans Leu2265–Ser2275. A compositionally biased stretch (basic residues) spans Lys2288–Lys2305. Positions Pro2315–Ser2403 constitute an SPAZ domain. A phosphoserine mark is found at Ser2317, Ser2321, Ser2359, Ser2389, Ser2392, Ser2394, and Ser2403. Over residues Asn2348–Asn2368 the composition is skewed to polar residues. Low complexity predominate over residues Lys2382–Pro2395. Phosphothreonine occurs at positions 2430, 2451, 2455, and 2458. Phosphoserine occurs at positions 2512 and 2534. Thr2553 is subject to Phosphothreonine. The disordered stretch occupies residues Gln2555–Ser2577. Ser2557 and Ser2569 each carry phosphoserine. The span at Glu2568–Ser2577 shows a compositional bias: polar residues. Thr2625 carries the post-translational modification Phosphothreonine. Coiled coils occupy residues Ala2675 to Arg2703 and Asp2746 to Lys2947.

The protein belongs to the TACC family. As to quaternary structure, interacts with CCDC100/CEP120. Interacts with microtubules. Interacts with YEATS4, GCN5L2 and PCAF. Post-translationally, phosphorylated by TTK; which is required for localization in centrosome. As to expression, strongly expressed in heart, skeletal muscle, brain, prostate, thyroid and trachea.

It localises to the cytoplasm. The protein localises to the nucleus. It is found in the cytoskeleton. The protein resides in the microtubule organizing center. Its subcellular location is the centrosome. Its function is as follows. Plays a role in the microtubule-dependent coupling of the nucleus and the centrosome. Involved in the processes that regulate centrosome-mediated interkinetic nuclear migration (INM) of neural progenitors. May play a role in organizing centrosomal microtubules. May act as a tumor suppressor protein. May represent a tumor progression marker. The polypeptide is Transforming acidic coiled-coil-containing protein 2 (TACC2) (Homo sapiens (Human)).